Reading from the N-terminus, the 356-residue chain is Ribosomal RNA large subunit methyltransferase M (356 aa).

S-adenosyl-L-methionine contacts are provided by residues Ser-187, 220–223 (CPGG), Asp-239, Asp-259, and Asp-276. Catalysis depends on Lys-305, which acts as the Proton acceptor.

Belongs to the class I-like SAM-binding methyltransferase superfamily. RNA methyltransferase RlmE family. RlmM subfamily. In terms of assembly, monomer.

It is found in the cytoplasm. It carries out the reaction cytidine(2498) in 23S rRNA + S-adenosyl-L-methionine = 2'-O-methylcytidine(2498) in 23S rRNA + S-adenosyl-L-homocysteine + H(+). In terms of biological role, catalyzes the 2'-O-methylation at nucleotide C2498 in 23S rRNA. The protein is Ribosomal RNA large subunit methyltransferase M of Pseudoalteromonas atlantica (strain T6c / ATCC BAA-1087).